Reading from the N-terminus, the 978-residue chain is Serine/threonine-protein kinase PLK4 (978 aa).

The Protein kinase domain occupies 13-266 (FQVLDLLGKG…LSGILDHPFI (254 aa)). ATP-binding positions include 19-27 (LGKGGFACV) and Lys-42. The active-site Proton acceptor is the Asp-137. Polar residues-rich tracts occupy residues 271 to 282 (LNTKYSSPTRQH) and 291 to 304 (SLDSGTGTMATIST). Disordered stretches follow at residues 271 to 381 (LNTK…TRTS), 489 to 578 (IEQP…AERL), 788 to 818 (AWKNSSGKSEKQDQQGCSNGQSQPVLPSSPS), and 838 to 869 (AQTTNPAFPGKSRKTSPSKTSRHKQSPAQPIP). Residues 324–335 (RTSDIWPRDPKH) are compositionally biased toward basic and acidic residues. Polar residues-rich tracts occupy residues 351–362 (TENVTTGSSSHV) and 371–381 (AQYSGLKTRTS). Composition is skewed to basic and acidic residues over residues 518–527 (GSDSVSKDFD) and 536–566 (ESRRRQNHRSDSERQTRRAEKSRSGGRDKSL). The region spanning 565-678 (SLGELTEPLN…AKFVQLVRKL (114 aa)) is the Cryptic POLO box 1 (CPB1) domain. Positions 679-792 (TPKVTLYSKH…GRRPPAWKNS (114 aa)) constitute a Cryptic POLO box 2 (CPB2) domain. Positions 801-818 (QQGCSNGQSQPVLPSSPS) are enriched in polar residues. A compositionally biased stretch (basic residues) spans 848-862 (KSRKTSPSKTSRHKQ). Residues 895–973 (HVCKMAFVDG…LPAVIKTLAT (79 aa)) form the POLO box domain.

It belongs to the protein kinase superfamily. Ser/Thr protein kinase family. CDC5/Polo subfamily. As to quaternary structure, homodimer. Post-translationally, ubiquitinated; leading to its degradation by the proteasome.

The protein localises to the cytoplasm. Its subcellular location is the cytoskeleton. The protein resides in the microtubule organizing center. It is found in the centrosome. It localises to the centriole. The enzyme catalyses L-seryl-[protein] + ATP = O-phospho-L-seryl-[protein] + ADP + H(+). It catalyses the reaction L-threonyl-[protein] + ATP = O-phospho-L-threonyl-[protein] + ADP + H(+). Functionally, serine/threonine-protein kinase that plays a central role in centriole duplication. Able to trigger procentriole formation on the surface of the mother centriole cylinder, leading to the recruitment of centriole biogenesis proteins. When overexpressed, it is able to induce centrosome amplification through the simultaneous generation of multiple procentrioles adjoining each parental centriole during S phase. The polypeptide is Serine/threonine-protein kinase PLK4 (Nematostella vectensis (Starlet sea anemone)).